The sequence spans 192 residues: Pyridoxine/pyridoxamine 5'-phosphate oxidase (192 aa).

FMN is bound by residues 41 to 46, 56 to 57, arginine 62, lysine 63, and glutamine 85; these read RMMLLK and FT. Lysine 46 provides a ligand contact to substrate. Substrate is bound by residues tyrosine 103, arginine 107, and serine 111. FMN-binding positions include 120 to 121 and tryptophan 165; that span reads QS. Residue 171–173 coordinates substrate; it reads RLH. Residue arginine 175 coordinates FMN.

This sequence belongs to the pyridoxamine 5'-phosphate oxidase family. In terms of assembly, homodimer. Requires FMN as cofactor.

It catalyses the reaction pyridoxamine 5'-phosphate + O2 + H2O = pyridoxal 5'-phosphate + H2O2 + NH4(+). The enzyme catalyses pyridoxine 5'-phosphate + O2 = pyridoxal 5'-phosphate + H2O2. The protein operates within cofactor metabolism; pyridoxal 5'-phosphate salvage; pyridoxal 5'-phosphate from pyridoxamine 5'-phosphate: step 1/1. It participates in cofactor metabolism; pyridoxal 5'-phosphate salvage; pyridoxal 5'-phosphate from pyridoxine 5'-phosphate: step 1/1. Functionally, catalyzes the oxidation of either pyridoxine 5'-phosphate (PNP) or pyridoxamine 5'-phosphate (PMP) into pyridoxal 5'-phosphate (PLP). This is Pyridoxine/pyridoxamine 5'-phosphate oxidase from Zymomonas mobilis subsp. mobilis (strain ATCC 31821 / ZM4 / CP4).